The primary structure comprises 730 residues: Polyphosphate kinase (730 aa).

The segment covering 1–21 (MMRHDRNVTEIDAETRPDENL) has biased composition (basic and acidic residues). Residues 1-39 (MMRHDRNVTEIDAETRPDENLWHSGDSAVGAPPAATPAA) form a disordered region. Asparagine 86 contributes to the ATP binding site. Residues arginine 423 and arginine 453 each coordinate Mg(2+). Catalysis depends on histidine 483, which acts as the Phosphohistidine intermediate. Residues tyrosine 516, arginine 612, and histidine 640 each contribute to the ATP site.

The protein belongs to the polyphosphate kinase 1 (PPK1) family. Mg(2+) serves as cofactor. Post-translationally, an intermediate of this reaction is the autophosphorylated ppk in which a phosphate is covalently linked to a histidine residue through a N-P bond.

The catalysed reaction is [phosphate](n) + ATP = [phosphate](n+1) + ADP. Its function is as follows. Catalyzes the reversible transfer of the terminal phosphate of ATP to form a long-chain polyphosphate (polyP). The chain is Polyphosphate kinase from Mycolicibacterium paratuberculosis (strain ATCC BAA-968 / K-10) (Mycobacterium paratuberculosis).